The chain runs to 168 residues: MAILTILEFPDPRLRTIAKPIETVDDGIRRLIDDMFETMYAAPGIGLAATQVNVHKRLVVMDLSEDKNEPRVFINPEFEALTEELEPYQEGCLSVPGFYENVDRPQKVRIRALDRDGQPFELVAEGLLAVCIQHECDHLNGKLFVDYLSTLKRDRIRKKLEKQHRQHG.

Residues Cys92 and His134 each coordinate Fe cation. Glu135 is an active-site residue. His138 is a binding site for Fe cation.

This sequence belongs to the polypeptide deformylase family. It depends on Fe(2+) as a cofactor.

The enzyme catalyses N-terminal N-formyl-L-methionyl-[peptide] + H2O = N-terminal L-methionyl-[peptide] + formate. Functionally, removes the formyl group from the N-terminal Met of newly synthesized proteins. Requires at least a dipeptide for an efficient rate of reaction. N-terminal L-methionine is a prerequisite for activity but the enzyme has broad specificity at other positions. The protein is Peptide deformylase of Azotobacter vinelandii (strain DJ / ATCC BAA-1303).